Consider the following 164-residue polypeptide: Crossover junction endodeoxyribonuclease RuvC (164 aa).

Catalysis depends on residues D7, E67, and D140. The Mg(2+) site is built by D7, E67, and D140.

Belongs to the RuvC family. In terms of assembly, homodimer which binds Holliday junction (HJ) DNA. The HJ becomes 2-fold symmetrical on binding to RuvC with unstacked arms; it has a different conformation from HJ DNA in complex with RuvA. In the full resolvosome a probable DNA-RuvA(4)-RuvB(12)-RuvC(2) complex forms which resolves the HJ. Requires Mg(2+) as cofactor.

The protein localises to the cytoplasm. The catalysed reaction is Endonucleolytic cleavage at a junction such as a reciprocal single-stranded crossover between two homologous DNA duplexes (Holliday junction).. The RuvA-RuvB-RuvC complex processes Holliday junction (HJ) DNA during genetic recombination and DNA repair. Endonuclease that resolves HJ intermediates. Cleaves cruciform DNA by making single-stranded nicks across the HJ at symmetrical positions within the homologous arms, yielding a 5'-phosphate and a 3'-hydroxyl group; requires a central core of homology in the junction. The consensus cleavage sequence is 5'-(A/T)TT(C/G)-3'. Cleavage occurs on the 3'-side of the TT dinucleotide at the point of strand exchange. HJ branch migration catalyzed by RuvA-RuvB allows RuvC to scan DNA until it finds its consensus sequence, where it cleaves and resolves the cruciform DNA. The polypeptide is Crossover junction endodeoxyribonuclease RuvC (Alkaliphilus oremlandii (strain OhILAs) (Clostridium oremlandii (strain OhILAs))).